The primary structure comprises 602 residues: Myotubularin (602 aa).

The tract at residues 1-40 (MASSSASDCDAHPVERESMRKVSQDGVRQDMSKSGPRLPG) is disordered. Positions 9–31 (CDAHPVERESMRKVSQDGVRQDM) are enriched in basic and acidic residues. At Ser18 the chain carries Phosphoserine. The 70-residue stretch at 28–97 (RQDMSKSGPR…GVISRIEKMG (70 aa)) folds into the GRAM domain. The Myotubularin phosphatase domain occupies 163–538 (GWAIYNPVEE…RHLELWVNYY (376 aa)). Residues Asn288, Asn313, and Ile314 each contribute to the a 1,2-diacyl-sn-glycero-3-phospho-(1D-myo-inositol-3,5-bisphosphate) site. Residues Asn288, Asn313, and Ile314 each contribute to the a 1,2-diacyl-sn-glycero-3-phospho-(1D-myo-inositol-3-phosphate) site. Cys375 functions as the Phosphocysteine intermediate in the catalytic mechanism. Positions 376, 377, 378, 379, 380, 381, 417, and 421 each coordinate a 1,2-diacyl-sn-glycero-3-phospho-(1D-myo-inositol-3,5-bisphosphate). A 1,2-diacyl-sn-glycero-3-phospho-(1D-myo-inositol-3-phosphate) contacts are provided by Ser376, Asp377, Gly378, Trp379, Asp380, and Arg381. Residue Arg421 coordinates a 1,2-diacyl-sn-glycero-3-phospho-(1D-myo-inositol-3-phosphate). Thr495 carries the post-translational modification Phosphothreonine. Residues 578 to 592 (PTKLTDSSTPPSGSA) are compositionally biased toward polar residues. Positions 578–602 (PTKLTDSSTPPSGSAQIAPRMQTHF) are disordered.

This sequence belongs to the protein-tyrosine phosphatase family. Non-receptor class myotubularin subfamily. As to quaternary structure, heterodimer with MTMR12. Interacts with KMT2A/MLL1 (via SET domain). Interacts with DES in skeletal muscle but not in cardiac muscle. Interacts with SPEG.

The protein localises to the cytoplasm. Its subcellular location is the cell membrane. The protein resides in the cell projection. It is found in the filopodium. It localises to the ruffle. The protein localises to the late endosome. Its subcellular location is the myofibril. The protein resides in the sarcomere. It catalyses the reaction a 1,2-diacyl-sn-glycero-3-phospho-(1D-myo-inositol-3-phosphate) + H2O = a 1,2-diacyl-sn-glycero-3-phospho-(1D-myo-inositol) + phosphate. The catalysed reaction is a 1,2-diacyl-sn-glycero-3-phospho-(1D-myo-inositol-3,5-bisphosphate) + H2O = a 1,2-diacyl-sn-glycero-3-phospho-(1D-myo-inositol-5-phosphate) + phosphate. The enzyme catalyses 1,2-dioctanoyl-sn-glycero-3-phospho-(1-D-myo-inositol-3-phosphate) + H2O = 1,2-dioctanoyl-sn-glycero-3-phospho-(1D-myo-inositol) + phosphate. It carries out the reaction 1,2-dioctanoyl-sn-glycero-3-phospho-(1D-myo-inositol-3,5-bisphosphate) + H2O = 1,2-dioctanoyl-sn-glycero-3-phospho-(1D-myo-inositol-5-phosphate) + phosphate. It catalyses the reaction 1,2-dihexadecanoyl-sn-glycero-3-phospho-(1D-myo-inositol-3,5-phosphate) + H2O = 1,2-dihexadecanoyl-sn-glycero-3-phospho-(1D-myo-inositol-5-phosphate) + phosphate. Its activity is regulated as follows. Allosterically activated by phosphatidylinositol 5-phosphate (PI5P). Lipid phosphatase which dephosphorylates phosphatidylinositol 3-monophosphate (PI3P) and phosphatidylinositol 3,5-bisphosphate (PI(3,5)P2). Has also been shown to dephosphorylate phosphotyrosine- and phosphoserine-containing peptides. Negatively regulates EGFR degradation through regulation of EGFR trafficking from the late endosome to the lysosome. Plays a role in vacuolar formation and morphology. Regulates desmin intermediate filament assembly and architecture. Plays a role in mitochondrial morphology and positioning. Required for skeletal muscle maintenance but not for myogenesis. In skeletal muscles, stabilizes MTMR12 protein levels. The protein is Myotubularin of Rattus norvegicus (Rat).